Reading from the N-terminus, the 310-residue chain is Glycerol-3-phosphate dehydrogenase [NAD(P)+] (310 aa).

Residues tryptophan 14, arginine 34, arginine 35, and lysine 82 each coordinate NADPH. Sn-glycerol 3-phosphate contacts are provided by lysine 82 and glycine 110. Serine 114 contacts NADPH. Lysine 165, aspartate 218, serine 228, arginine 229, and asparagine 230 together coordinate sn-glycerol 3-phosphate. Residue lysine 165 is the Proton acceptor of the active site. NADPH is bound at residue arginine 229. Residue glutamate 255 participates in NADPH binding.

The protein belongs to the NAD-dependent glycerol-3-phosphate dehydrogenase family.

It is found in the cytoplasm. The enzyme catalyses sn-glycerol 3-phosphate + NAD(+) = dihydroxyacetone phosphate + NADH + H(+). It catalyses the reaction sn-glycerol 3-phosphate + NADP(+) = dihydroxyacetone phosphate + NADPH + H(+). The protein operates within membrane lipid metabolism; glycerophospholipid metabolism. Catalyzes the reduction of the glycolytic intermediate dihydroxyacetone phosphate (DHAP) to sn-glycerol 3-phosphate (G3P), the key precursor for phospholipid synthesis. In Acaryochloris marina (strain MBIC 11017), this protein is Glycerol-3-phosphate dehydrogenase [NAD(P)+].